The following is a 1194-amino-acid chain: Immunoglobulin superfamily member 3 (1194 aa).

The signal sequence occupies residues 1–19; it reads MKCFFPVLSCLAVLGVVSA. Ig-like C2-type domains are found at residues 20-138, 143-262, 276-386, 401-539, 545-661, 676-803, 813-945, and 949-1097; these read QRQV…AKMN, PDSL…WYAM, PTDK…KTVT, PIVV…VSIT, FAVT…WTRL, PVTK…EEVS, PDSR…TAVT, and PDAA…YRLT. The Extracellular segment spans residues 20 to 1124; it reads QRQVTVQEGP…LQSLICSNDA (1105 aa). Disulfide bonds link Cys-42–Cys-120 and Cys-167–Cys-246. Residue Asn-43 is glycosylated (N-linked (GlcNAc...) asparagine). An EWI motif motif is present at residues 250–252; sequence EWI. A disulfide bridge connects residues Cys-302 and Cys-376. N-linked (GlcNAc...) asparagine glycosylation occurs at Asn-418. 5 disulfide bridges follow: Cys-432/Cys-511, Cys-566/Cys-645, Cys-701/Cys-782, Cys-838/Cys-918, and Cys-974/Cys-1080. N-linked (GlcNAc...) asparagine glycosylation occurs at Asn-842. Positions 997–1030 are disordered; that stretch reads GGGKRGSLGIDEQEEEEEEEDISQEEDSEDPTER. Acidic residues predominate over residues 1007 to 1026; the sequence is DEQEEEEEEEDISQEEDSED. N-linked (GlcNAc...) asparagine glycosylation occurs at Asn-1077. The helical transmembrane segment at 1125–1145 threads the bilayer; the sequence is LFYFVFFYPFPIFGILIITIL. Residues 1146 to 1194 are Cytoplasmic-facing; the sequence is LVRFKSRNSSKNSEGKNGVPLLWIKEPHLNYSPTCLEPPVLSIHPGAID.

As to expression, expressed in the lacrimal duct and lacrimal gland.

Its subcellular location is the membrane. The protein is Immunoglobulin superfamily member 3 (Igsf3) of Mus musculus (Mouse).